A 222-amino-acid polypeptide reads, in one-letter code: Uracil-DNA glycosylase (222 aa).

Residue Asp61 is the Proton acceptor of the active site.

It belongs to the uracil-DNA glycosylase (UDG) superfamily. UNG family.

It localises to the cytoplasm. It catalyses the reaction Hydrolyzes single-stranded DNA or mismatched double-stranded DNA and polynucleotides, releasing free uracil.. Functionally, excises uracil residues from the DNA which can arise as a result of misincorporation of dUMP residues by DNA polymerase or due to deamination of cytosine. The polypeptide is Uracil-DNA glycosylase (Aeromonas hydrophila subsp. hydrophila (strain ATCC 7966 / DSM 30187 / BCRC 13018 / CCUG 14551 / JCM 1027 / KCTC 2358 / NCIMB 9240 / NCTC 8049)).